The primary structure comprises 89 residues: Gibberellin-regulated protein 10 (89 aa).

The first 25 residues, 1 to 25 (MKFPAVKVLIISLLITSSLFILSTA), serve as a signal peptide directing secretion.

It belongs to the GASA family. In terms of processing, six disulfide bonds may be present. As to expression, expressed in vasculature of rosette leaves and roots, cotyledon and root tips and developing seeds.

It localises to the secreted. Its function is as follows. Gibberellin-regulated protein that may function in hormonal controlled steps of development such as seed germination, flowering and seed maturation. This Arabidopsis thaliana (Mouse-ear cress) protein is Gibberellin-regulated protein 10 (GASA10).